The chain runs to 149 residues: Transthyretin (149 aa).

The signal sequence occupies residues 1-20; sequence MAFHSLLLLCLAGLVFLSEA. Cys32 carries the sulfocysteine modification. An L-thyroxine-binding site is contributed by Lys37. Residue Glu64 is modified to 4-carboxyglutamate. The L-thyroxine site is built by Glu76 and Ser139.

Belongs to the transthyretin family. As to quaternary structure, homotetramer. Dimer of dimers. In the homotetramer, subunits assemble around a central channel that can accommodate two ligand molecules. Interacts with RBP4. Post-translationally, sulfonation of the reactive cysteine Cys-32 enhances the stability of the native conformation of TTR, avoiding misassembly of the protein leading to amyloid formation. As to expression, highly expressed in the choroid plexus.

It is found in the secreted. Functionally, thyroid hormone-binding protein. Probably transports thyroxine from the bloodstream to the brain. This chain is Transthyretin (TTR), found in Sminthopsis macroura (Stripe-faced dunnart).